Consider the following 186-residue polypeptide: Protein Syd (186 aa).

Belongs to the Syd family.

It is found in the cell inner membrane. Functionally, interacts with the SecY protein in vivo. May bind preferentially to an uncomplexed state of SecY, thus functioning either as a chelating agent for excess SecY in the cell or as a regulatory factor that negatively controls the translocase function. This Erwinia tasmaniensis (strain DSM 17950 / CFBP 7177 / CIP 109463 / NCPPB 4357 / Et1/99) protein is Protein Syd.